Here is a 184-residue protein sequence, read N- to C-terminus: TATA-box-binding protein (184 aa).

2 consecutive repeat copies span residues 9 to 85 and 100 to 178.

This sequence belongs to the TBP family.

General factor that plays a role in the activation of archaeal genes transcribed by RNA polymerase. Binds specifically to the TATA box promoter element which lies close to the position of transcription initiation. The protein is TATA-box-binding protein of Picrophilus torridus (strain ATCC 700027 / DSM 9790 / JCM 10055 / NBRC 100828 / KAW 2/3).